The following is a 194-amino-acid chain: Probable GTP-binding protein EngB (194 aa).

Residues 23–194 (LNGEFVFVGR…YELIEIFGGV (172 aa)) form the EngB-type G domain. GTP-binding positions include 31–38 (GRSNVGKS), 57–61 (GKTAS), 75–78 (DLPG), 143–146 (TKMD), and 173–175 (YSA). Residues serine 38 and threonine 59 each coordinate Mg(2+).

The protein belongs to the TRAFAC class TrmE-Era-EngA-EngB-Septin-like GTPase superfamily. EngB GTPase family. Mg(2+) serves as cofactor.

In terms of biological role, necessary for normal cell division and for the maintenance of normal septation. This chain is Probable GTP-binding protein EngB, found in Thermosipho africanus (strain TCF52B).